Reading from the N-terminus, the 157-residue chain is ATP synthase subunit b (157 aa).

The helical transmembrane segment at 7–27 threads the bilayer; the sequence is LIAQLVVFFILAWVTMKFVWP.

Belongs to the ATPase B chain family. F-type ATPases have 2 components, F(1) - the catalytic core - and F(0) - the membrane proton channel. F(1) has five subunits: alpha(3), beta(3), gamma(1), delta(1), epsilon(1). F(0) has three main subunits: a(1), b(2) and c(10-14). The alpha and beta chains form an alternating ring which encloses part of the gamma chain. F(1) is attached to F(0) by a central stalk formed by the gamma and epsilon chains, while a peripheral stalk is formed by the delta and b chains.

It is found in the cell inner membrane. Functionally, f(1)F(0) ATP synthase produces ATP from ADP in the presence of a proton or sodium gradient. F-type ATPases consist of two structural domains, F(1) containing the extramembraneous catalytic core and F(0) containing the membrane proton channel, linked together by a central stalk and a peripheral stalk. During catalysis, ATP synthesis in the catalytic domain of F(1) is coupled via a rotary mechanism of the central stalk subunits to proton translocation. In terms of biological role, component of the F(0) channel, it forms part of the peripheral stalk, linking F(1) to F(0). The sequence is that of ATP synthase subunit b from Aromatoleum aromaticum (strain DSM 19018 / LMG 30748 / EbN1) (Azoarcus sp. (strain EbN1)).